Consider the following 56-residue polypeptide: 4Fe-4S ferredoxin FdxA (56 aa).

4Fe-4S ferredoxin-type domains are found at residues 1 to 28 (MAYV…SSGD) and 29 to 56 (DRYV…PVQA). [4Fe-4S] cluster contacts are provided by Cys9, Cys12, Cys15, Cys19, Cys38, Cys41, Cys44, and Cys48.

The cofactor is [4Fe-4S] cluster.

In terms of biological role, ferredoxins are iron-sulfur proteins that transfer electrons in a wide variety of metabolic reactions. The sequence is that of 4Fe-4S ferredoxin FdxA from Gottschalkia acidurici (strain ATCC 7906 / DSM 604 / BCRC 14475 / CIP 104303 / KCTC 5404 / NCIMB 10678 / 9a) (Clostridium acidurici).